We begin with the raw amino-acid sequence, 358 residues long: DnaJ homolog subfamily C member 18 (358 aa).

In terms of domain architecture, J spans 82 to 146; sequence NYYEILGVSR…DKRLRYDEYG (65 aa). The helical transmembrane segment at 228–248 threads the bilayer; sequence AFIQLLPVLVIVIISVITQLL.

Its subcellular location is the endoplasmic reticulum membrane. The protein is DnaJ homolog subfamily C member 18 (DNAJC18) of Macaca fascicularis (Crab-eating macaque).